The primary structure comprises 114 residues: Large ribosomal subunit protein uL22c (114 aa).

This sequence belongs to the universal ribosomal protein uL22 family. As to quaternary structure, part of the 50S ribosomal subunit.

It localises to the plastid. It is found in the cyanelle. Functionally, this protein binds specifically to 23S rRNA. The globular domain of the protein is located near the polypeptide exit tunnel on the outside of the subunit, while an extended beta-hairpin is found that lines the wall of the exit tunnel in the center of the 70S ribosome. In Cyanophora paradoxa, this protein is Large ribosomal subunit protein uL22c (rpl22).